The chain runs to 232 residues: Succinyl-CoA:3-ketoacid coenzyme A transferase subunit A (232 aa).

24-30 (GGFGLCG) is a CoA binding site.

This sequence belongs to the 3-oxoacid CoA-transferase subunit A family. In terms of assembly, heterodimer of a subunit A and a subunit B.

It carries out the reaction a 3-oxo acid + succinyl-CoA = a 3-oxoacyl-CoA + succinate. The protein is Succinyl-CoA:3-ketoacid coenzyme A transferase subunit A (scoA) of Helicobacter pylori (strain J99 / ATCC 700824) (Campylobacter pylori J99).